The following is a 379-amino-acid chain: Putative glutamate--cysteine ligase 2 (379 aa).

This sequence belongs to the glutamate--cysteine ligase type 2 family. YbdK subfamily.

The catalysed reaction is L-cysteine + L-glutamate + ATP = gamma-L-glutamyl-L-cysteine + ADP + phosphate + H(+). In terms of biological role, ATP-dependent carboxylate-amine ligase which exhibits weak glutamate--cysteine ligase activity. In Mycobacterium avium (strain 104), this protein is Putative glutamate--cysteine ligase 2.